The chain runs to 566 residues: Rho GTPase-activating protein gacH (566 aa).

Disordered regions lie at residues Met-1–Thr-56, Leu-65–Lys-84, Ser-128–Ser-168, and Lys-322–Asn-366. The span at Ser-14–Ser-35 shows a compositional bias: low complexity. Residues Pro-36–Thr-56 are compositionally biased toward polar residues. The span at Leu-65 to Asn-83 shows a compositional bias: low complexity. The segment covering Asp-130–Asn-141 has biased composition (acidic residues). Over residues Asn-142–Asn-160 the composition is skewed to low complexity. Residues Lys-327–Thr-337 are compositionally biased toward polar residues. Over residues Ser-345–Gln-356 the composition is skewed to low complexity. A Rho-GAP domain is found at Gly-369–Tyr-564.

It is found in the cytoplasm. Rho GTPase-activating protein involved in the signal transduction pathway. This chain is Rho GTPase-activating protein gacH (gacH), found in Dictyostelium discoideum (Social amoeba).